The sequence spans 64 residues: Beta-defensin 1 (64 aa).

The N-terminal stretch at 1–20 (MRLHHLLLVLFFLVLSAGSG) is a signal peptide. A propeptide spanning residues 21–26 (FTQGIR) is cleaved from the precursor. 3 disulfide bridges follow: Cys-31–Cys-60, Cys-38–Cys-53, and Cys-43–Cys-61.

Belongs to the beta-defensin family. In terms of assembly, monomer. Homodimer.

It localises to the secreted. The protein localises to the membrane. Has bactericidal activity. May act as a ligand for C-C chemokine receptor CCR6. Positively regulates the sperm motility and bactericidal activity in a CCR6-dependent manner. Binds to CCR6 and triggers Ca2+ mobilization in the sperm which is important for its motility. The sequence is that of Beta-defensin 1 (DEFB1) from Capra hircus (Goat).